We begin with the raw amino-acid sequence, 146 residues long: Hemoglobin subunit beta (146 aa).

A Globin domain is found at 2-146 (HWTAEEKSAI…VAHALAHQYH (145 aa)). Heme b is bound by residues His-63 and His-92.

This sequence belongs to the globin family. In terms of assembly, heterotetramer of two alpha chains and two beta chains. Oxygenation results in dissociation to dimers. In terms of tissue distribution, red blood cells.

Functionally, involved in oxygen transport from the lung to the various peripheral tissues. The sequence is that of Hemoglobin subunit beta (HBB) from Erythrolamprus miliaris (South American water snake).